A 207-amino-acid polypeptide reads, in one-letter code: MLTIAMPKGRIFEEAVELLRRADYALPPEFTESRKLVIDVPEENMRFILAKPMDVVTYVEHGVADLGIAGKDVLMEEERDVYELLDLHISRCHLAVAGMPGAKMNEIAPRVATKYPNIASTYFREQGEQVEIIRLNGSIELAPLIGLADRIVDIVSTGRTLRENGLVELERIAEVTSRLIVNPASYRLNGGDIERLVDRLAAVIPQP.

This sequence belongs to the ATP phosphoribosyltransferase family. Short subfamily. Heteromultimer composed of HisG and HisZ subunits.

Its subcellular location is the cytoplasm. It carries out the reaction 1-(5-phospho-beta-D-ribosyl)-ATP + diphosphate = 5-phospho-alpha-D-ribose 1-diphosphate + ATP. It functions in the pathway amino-acid biosynthesis; L-histidine biosynthesis; L-histidine from 5-phospho-alpha-D-ribose 1-diphosphate: step 1/9. Its function is as follows. Catalyzes the condensation of ATP and 5-phosphoribose 1-diphosphate to form N'-(5'-phosphoribosyl)-ATP (PR-ATP). Has a crucial role in the pathway because the rate of histidine biosynthesis seems to be controlled primarily by regulation of HisG enzymatic activity. The protein is ATP phosphoribosyltransferase of Geobacillus kaustophilus (strain HTA426).